A 426-amino-acid polypeptide reads, in one-letter code: Serine hydroxymethyltransferase (426 aa).

Residues leucine 118 and 122 to 124 each bind (6S)-5,6,7,8-tetrahydrofolate; that span reads GHL. Lysine 227 is subject to N6-(pyridoxal phosphate)lysine.

Belongs to the SHMT family. In terms of assembly, homodimer. The cofactor is pyridoxal 5'-phosphate.

The protein localises to the cytoplasm. It carries out the reaction (6R)-5,10-methylene-5,6,7,8-tetrahydrofolate + glycine + H2O = (6S)-5,6,7,8-tetrahydrofolate + L-serine. The protein operates within one-carbon metabolism; tetrahydrofolate interconversion. Its pathway is amino-acid biosynthesis; glycine biosynthesis; glycine from L-serine: step 1/1. Catalyzes the reversible interconversion of serine and glycine with tetrahydrofolate (THF) serving as the one-carbon carrier. This reaction serves as the major source of one-carbon groups required for the biosynthesis of purines, thymidylate, methionine, and other important biomolecules. Also exhibits THF-independent aldolase activity toward beta-hydroxyamino acids, producing glycine and aldehydes, via a retro-aldol mechanism. In Mycobacterium leprae (strain Br4923), this protein is Serine hydroxymethyltransferase.